Here is a 265-residue protein sequence, read N- to C-terminus: Tyrosine protein kinase-interacting protein (265 aa).

Residues 1-14 (MANEGEEIELTEFP) are compositionally biased toward acidic residues. Residues 1–49 (MANEGEEIELTEFPETEKERKDEEKLSSCSEETTDTSSSSSSDHVPAPI) form a disordered region. Residues 1–238 (MANEGEEIEL…LKRLENKVNA (238 aa)) are Cytoplasmic-facing. Residues 15-26 (ETEKERKDEEKL) are compositionally biased toward basic and acidic residues. Residues 27 to 43 (SSCSEETTDTSSSSSSD) show a composition bias toward low complexity. The residue at position 123 (Tyr123) is a Phosphotyrosine; by host LCK. Tyr136 carries the phosphotyrosine; by host modification. Residues 155–164 (EDLQSFLEKY) form a CSKH/LBD2 region. The segment at 172 to 192 (KRDLSATWDPGMPTPALPPRP) is disordered. The SH3B/LBD1 stretch occupies residues 183 to 192 (MPTPALPPRP). Positions 183-192 (MPTPALPPRP) are enriched in pro residues. The SH3 binding stretch occupies residues 225–234 (IVKDLKRLEN). The helical transmembrane segment at 239-259 (IICLVVVILAVLLLVTVLSIL) threads the bilayer. The Extracellular portion of the chain corresponds to 260-265 (HIGMKS).

In terms of assembly, binds host LCK, human WDR48 and human NXF1/TAP. Forms a complex with activated LCK and STAT1 and STAT3. Phosphorylation on Tyr-123 acts as a docking site for the recruitment of STATs 1 and 3.

Its subcellular location is the host cell membrane. Plays a critical role in virus induced T-cell transformation. Binds to T-cell-specific tyrosine kinase LCK SH2 and SH3 domains, thereby activating its kinase activity. Once phosphorylated by host LCK, forms a complex with at least STAT 1 and 3, resulting on the phosphorylation of STAT3 and presumably STAT1, and their migration into the nucleus to induce transcription of target genes. Stimulates host ILF3/NF-AT-90 activity. Association with host NXF1/TAP transduces the signal up-regulating surface expression of adhesion molecules as well as activating NF-kappa-B activity. Acts synergistically with StpC to stimulate NF-kappa-B activity and interleukin-2 gene expression. Activation of NF-kappa-B protects lymphocytes from apoptosis, thereby facilitating viral induced cell transformation. May cause down-regulation of host LCK and cell apoptosis when stably overexpressed ex vivo. Interaction with WDR48 induce degradation of T-cell receptor in a lysosome-dependent fashion, when both proteins are overexpressed. The biological effect of this interaction remains controversial since no T-cell receptor degradation is observed in infected cells. The sequence is that of Tyrosine protein kinase-interacting protein from Saimiriine herpesvirus 2 (strain 484) (SaHV-2).